Consider the following 201-residue polypeptide: FMN-dependent NADH:quinone oxidoreductase (201 aa).

FMN is bound by residues S10, 16–18 (SQS), 96–99 (MYNF), and 140–143 (SRGG).

This sequence belongs to the azoreductase type 1 family. Homodimer. FMN serves as cofactor.

The catalysed reaction is 2 a quinone + NADH + H(+) = 2 a 1,4-benzosemiquinone + NAD(+). The enzyme catalyses N,N-dimethyl-1,4-phenylenediamine + anthranilate + 2 NAD(+) = 2-(4-dimethylaminophenyl)diazenylbenzoate + 2 NADH + 2 H(+). In terms of biological role, quinone reductase that provides resistance to thiol-specific stress caused by electrophilic quinones. Functionally, also exhibits azoreductase activity. Catalyzes the reductive cleavage of the azo bond in aromatic azo compounds to the corresponding amines. In Escherichia coli O6:K15:H31 (strain 536 / UPEC), this protein is FMN-dependent NADH:quinone oxidoreductase.